The primary structure comprises 473 residues: Glutamate--tRNA ligase (473 aa).

The 'HIGH' region motif lies at 9–19 (PSPTGYLHVGG). Residues Cys98, Cys100, Cys125, and Asp127 each contribute to the Zn(2+) site. A 'KMSKS' region motif is present at residues 237 to 241 (KLSKR). Lys240 contacts ATP.

Belongs to the class-I aminoacyl-tRNA synthetase family. Glutamate--tRNA ligase type 1 subfamily. In terms of assembly, monomer. It depends on Zn(2+) as a cofactor.

Its subcellular location is the cytoplasm. The enzyme catalyses tRNA(Glu) + L-glutamate + ATP = L-glutamyl-tRNA(Glu) + AMP + diphosphate. In terms of biological role, catalyzes the attachment of glutamate to tRNA(Glu) in a two-step reaction: glutamate is first activated by ATP to form Glu-AMP and then transferred to the acceptor end of tRNA(Glu). The polypeptide is Glutamate--tRNA ligase (Sodalis glossinidius (strain morsitans)).